Reading from the N-terminus, the 495-residue chain is Bifunctional protein GlmU (495 aa).

The interval 1 to 241 (MPQQTAVVVL…AAKVTGVNDR (241 aa)) is pyrophosphorylase. Residues 10 to 13 (LAAG), K24, Q81, and 86 to 87 (GT) contribute to the UDP-N-acetyl-alpha-D-glucosamine site. D112 serves as a coordination point for Mg(2+). UDP-N-acetyl-alpha-D-glucosamine contacts are provided by G151, E166, N181, and N239. Mg(2+) is bound at residue N239. The linker stretch occupies residues 242-262 (VQLSIATRTMNRYILERHMRA). The segment at 263 to 495 (GVTIIDPAST…QATEQKDGEQ (233 aa)) is N-acetyltransferase. The UDP-N-acetyl-alpha-D-glucosamine site is built by R344 and K362. The active-site Proton acceptor is the H374. Positions 377 and 388 each coordinate UDP-N-acetyl-alpha-D-glucosamine. Residues A391, 397–398 (NY), S416, and A434 contribute to the acetyl-CoA site. The tract at residues 467 to 495 (GTAAATAAAQALAADEKSSQATEQKDGEQ) is disordered. Positions 468 to 479 (TAAATAAAQALA) are enriched in low complexity. The segment covering 480-495 (ADEKSSQATEQKDGEQ) has biased composition (basic and acidic residues).

The protein in the N-terminal section; belongs to the N-acetylglucosamine-1-phosphate uridyltransferase family. This sequence in the C-terminal section; belongs to the transferase hexapeptide repeat family. In terms of assembly, homotrimer. It depends on Mg(2+) as a cofactor.

It localises to the cytoplasm. It catalyses the reaction alpha-D-glucosamine 1-phosphate + acetyl-CoA = N-acetyl-alpha-D-glucosamine 1-phosphate + CoA + H(+). The catalysed reaction is N-acetyl-alpha-D-glucosamine 1-phosphate + UTP + H(+) = UDP-N-acetyl-alpha-D-glucosamine + diphosphate. It participates in nucleotide-sugar biosynthesis; UDP-N-acetyl-alpha-D-glucosamine biosynthesis; N-acetyl-alpha-D-glucosamine 1-phosphate from alpha-D-glucosamine 6-phosphate (route II): step 2/2. The protein operates within nucleotide-sugar biosynthesis; UDP-N-acetyl-alpha-D-glucosamine biosynthesis; UDP-N-acetyl-alpha-D-glucosamine from N-acetyl-alpha-D-glucosamine 1-phosphate: step 1/1. It functions in the pathway bacterial outer membrane biogenesis; LPS lipid A biosynthesis. In terms of biological role, catalyzes the last two sequential reactions in the de novo biosynthetic pathway for UDP-N-acetylglucosamine (UDP-GlcNAc). The C-terminal domain catalyzes the transfer of acetyl group from acetyl coenzyme A to glucosamine-1-phosphate (GlcN-1-P) to produce N-acetylglucosamine-1-phosphate (GlcNAc-1-P), which is converted into UDP-GlcNAc by the transfer of uridine 5-monophosphate (from uridine 5-triphosphate), a reaction catalyzed by the N-terminal domain. In Nocardia farcinica (strain IFM 10152), this protein is Bifunctional protein GlmU.